Here is a 637-residue protein sequence, read N- to C-terminus: tRNA uridine 5-carboxymethylaminomethyl modification enzyme MnmG (637 aa).

Residues 15-20 (GAGHAG), isoleucine 127, and serine 182 each bind FAD. An NAD(+)-binding site is contributed by 276-290 (GPRYCPSIEDKIVRF). Glutamine 373 provides a ligand contact to FAD.

The protein belongs to the MnmG family. Homodimer. Heterotetramer of two MnmE and two MnmG subunits. It depends on FAD as a cofactor.

It is found in the cytoplasm. Its function is as follows. NAD-binding protein involved in the addition of a carboxymethylaminomethyl (cmnm) group at the wobble position (U34) of certain tRNAs, forming tRNA-cmnm(5)s(2)U34. The sequence is that of tRNA uridine 5-carboxymethylaminomethyl modification enzyme MnmG from Streptococcus pneumoniae serotype 4 (strain ATCC BAA-334 / TIGR4).